Consider the following 185-residue polypeptide: Elongation factor P (185 aa).

It belongs to the elongation factor P family.

It is found in the cytoplasm. The protein operates within protein biosynthesis; polypeptide chain elongation. Functionally, involved in peptide bond synthesis. Stimulates efficient translation and peptide-bond synthesis on native or reconstituted 70S ribosomes in vitro. Probably functions indirectly by altering the affinity of the ribosome for aminoacyl-tRNA, thus increasing their reactivity as acceptors for peptidyl transferase. The protein is Elongation factor P of Oleidesulfovibrio alaskensis (strain ATCC BAA-1058 / DSM 17464 / G20) (Desulfovibrio alaskensis).